A 165-amino-acid polypeptide reads, in one-letter code: DELTA-actitoxin-Oor1a (165 aa).

The segment at 1-17 is N-terminal region; sequence ATFRVLAKVLAELGKVS. Phosphocholine is bound by residues Ser-41, Val-74, Ser-92, Pro-94, and Tyr-125. The interval 92 to 107 is trp-rich region, which is important for the binding to lipid membrane; that stretch reads SVPYDYNLYSNWWNVK.

Belongs to the actinoporin family. Sea anemone subfamily. In terms of assembly, octamer or nonamer in membranes. Monomer in the soluble state.

The protein localises to the secreted. Its subcellular location is the nematocyst. The protein resides in the target cell membrane. Pore-forming protein that forms cations-selective hydrophilic pores of around 1 nm and causes cardiac stimulation and cytolysis. Pore formation is a multi-step process that involves specific recognition of membrane sphingomyelin (but neither cholesterol nor phosphatidylcholine) using aromatic rich region and adjacent phosphocholine (POC) binding site, firm binding to the membrane (mainly driven by hydrophobic interactions) accompanied by the transfer of the N-terminal region to the lipid-water interface and finally pore formation after oligomerization of monomers. Cytolytic effects include red blood cells hemolysis, platelet aggregation and lysis, cytotoxic and cytostatic effects on fibroblasts. Lethality in mammals has been ascribed to severe vasospasm of coronary vessels, cardiac arrhythmia, and inotropic effects. The polypeptide is DELTA-actitoxin-Oor1a (Oulactis orientalis (Japan anemone)).